The chain runs to 530 residues: Phosphoenolpyruvate carboxykinase (ATP) (530 aa).

Arg60, Tyr195, and Lys201 together coordinate substrate. ATP-binding positions include Lys201, His221, and 237–245 (GLSGTGKTT). The Mn(2+) site is built by Lys201 and His221. A Mn(2+)-binding site is contributed by Asp258. Residues Glu286, Arg324, and Ser449 each coordinate ATP. Position 324 (Arg324) interacts with substrate.

It belongs to the phosphoenolpyruvate carboxykinase (ATP) family. The cofactor is Mn(2+).

It localises to the cytoplasm. It catalyses the reaction oxaloacetate + ATP = phosphoenolpyruvate + ADP + CO2. It participates in carbohydrate biosynthesis; gluconeogenesis. In terms of biological role, involved in the gluconeogenesis. Catalyzes the conversion of oxaloacetate (OAA) to phosphoenolpyruvate (PEP) through direct phosphoryl transfer between the nucleoside triphosphate and OAA. The sequence is that of Phosphoenolpyruvate carboxykinase (ATP) from Geobacter metallireducens (strain ATCC 53774 / DSM 7210 / GS-15).